Here is a 287-residue protein sequence, read N- to C-terminus: mRNA-capping enzyme regulatory subunit OPG124 (287 aa).

The protein belongs to the orthopoxvirus mRNA-capping enzyme regulatory subunit family. As to quaternary structure, interacts with the catalytic subunit OPG113.

Its subcellular location is the virion. Its function is as follows. Regulatory subunit of the mRNA cap enzyme which stabilizes the catalytic subunit and enhances its methyltransferase activity through an allosteric mechanism. Heterodimeric mRNA capping enzyme catalyzes the linkage of a N7-methyl-guanosine moiety to the first transcribed nucleotide (cap 0 structure), whereas the methyltransferase OPG102 is responsible for a second methylation at the 2'-O position of the ribose (cap 1 structure). Also involved in early viral gene transcription termination and intermediate viral gene transcription initiation. Early gene transcription termination requires the termination factor VTF, the DNA-dependent ATPase NPH-I/OPG123 and the RAP94/OPG109 subunit of the viral RNA polymerase, as well as the presence of a specific termination motif. Binds, together with RAP94/OPG109, to the termination motif 5'-UUUUUNU-3' in the nascent early mRNA. In Vaccinia virus (strain Copenhagen) (VACV), this protein is mRNA-capping enzyme regulatory subunit OPG124 (OPG124).